The following is a 140-amino-acid chain: MANERTFSILKPDATRRNITGAVNAVIEAAGLRIVGQRRIRMTREQAEKFYEVHKERPFFGELVEFMTSGPVVVQVLEGENAVAKYREVMGATNPAQAADGTIRKQFAESVGENTVHGSDSADNARLEIAQFFNDADIAA.

Lys-11, Phe-59, Arg-87, Thr-93, Arg-104, and Asn-114 together coordinate ATP. His-117 functions as the Pros-phosphohistidine intermediate in the catalytic mechanism.

This sequence belongs to the NDK family. In terms of assembly, homotetramer. Mg(2+) serves as cofactor.

Its subcellular location is the cytoplasm. The enzyme catalyses a 2'-deoxyribonucleoside 5'-diphosphate + ATP = a 2'-deoxyribonucleoside 5'-triphosphate + ADP. It carries out the reaction a ribonucleoside 5'-diphosphate + ATP = a ribonucleoside 5'-triphosphate + ADP. In terms of biological role, major role in the synthesis of nucleoside triphosphates other than ATP. The ATP gamma phosphate is transferred to the NDP beta phosphate via a ping-pong mechanism, using a phosphorylated active-site intermediate. This is Nucleoside diphosphate kinase from Methylorubrum extorquens (strain CM4 / NCIMB 13688) (Methylobacterium extorquens).